Consider the following 238-residue polypeptide: Aspartate/glutamate leucyltransferase (238 aa).

It belongs to the R-transferase family. Bpt subfamily.

It is found in the cytoplasm. The catalysed reaction is N-terminal L-glutamyl-[protein] + L-leucyl-tRNA(Leu) = N-terminal L-leucyl-L-glutamyl-[protein] + tRNA(Leu) + H(+). The enzyme catalyses N-terminal L-aspartyl-[protein] + L-leucyl-tRNA(Leu) = N-terminal L-leucyl-L-aspartyl-[protein] + tRNA(Leu) + H(+). Functions in the N-end rule pathway of protein degradation where it conjugates Leu from its aminoacyl-tRNA to the N-termini of proteins containing an N-terminal aspartate or glutamate. In Aeromonas hydrophila subsp. hydrophila (strain ATCC 7966 / DSM 30187 / BCRC 13018 / CCUG 14551 / JCM 1027 / KCTC 2358 / NCIMB 9240 / NCTC 8049), this protein is Aspartate/glutamate leucyltransferase.